A 414-amino-acid chain; its full sequence is Serine hydroxymethyltransferase (414 aa).

Residues L121 and 125–127 (GHL) each bind (6S)-5,6,7,8-tetrahydrofolate. N6-(pyridoxal phosphate)lysine is present on K229.

This sequence belongs to the SHMT family. As to quaternary structure, homodimer. It depends on pyridoxal 5'-phosphate as a cofactor.

It is found in the cytoplasm. It carries out the reaction (6R)-5,10-methylene-5,6,7,8-tetrahydrofolate + glycine + H2O = (6S)-5,6,7,8-tetrahydrofolate + L-serine. Its pathway is one-carbon metabolism; tetrahydrofolate interconversion. It participates in amino-acid biosynthesis; glycine biosynthesis; glycine from L-serine: step 1/1. Its function is as follows. Catalyzes the reversible interconversion of serine and glycine with tetrahydrofolate (THF) serving as the one-carbon carrier. This reaction serves as the major source of one-carbon groups required for the biosynthesis of purines, thymidylate, methionine, and other important biomolecules. Also exhibits THF-independent aldolase activity toward beta-hydroxyamino acids, producing glycine and aldehydes, via a retro-aldol mechanism. The chain is Serine hydroxymethyltransferase from Thiobacillus denitrificans (strain ATCC 25259 / T1).